The following is a 478-amino-acid chain: Cytochrome c-552 (478 aa).

Residues 1-26 (MTRIKINARRIFSLLIPFFFFTSVHA) form the signal peptide. Heme c is bound at residue H94. C122, C125, and K126 together coordinate heme. 6 residues coordinate heme c: C160, C163, H164, C209, C212, and H213. Ca(2+) contacts are provided by E215, Y216, K261, and Q263. Y216 lines the substrate pocket. H264 lines the substrate pocket. 9 residues coordinate heme c: H275, C282, C285, H286, H301, C314, C317, H318, and H393.

This sequence belongs to the cytochrome c-552 family. It depends on Ca(2+) as a cofactor. Requires heme c as cofactor.

Its subcellular location is the periplasm. The catalysed reaction is 6 Fe(III)-[cytochrome c] + NH4(+) + 2 H2O = 6 Fe(II)-[cytochrome c] + nitrite + 8 H(+). It functions in the pathway nitrogen metabolism; nitrate reduction (assimilation). In terms of biological role, catalyzes the reduction of nitrite to ammonia, consuming six electrons in the process. This is Cytochrome c-552 from Escherichia coli O17:K52:H18 (strain UMN026 / ExPEC).